The sequence spans 488 residues: E3 ubiquitin-protein ligase TRIM34 (488 aa).

The RING-type zinc finger occupies 15 to 60 (CPICLELLTEPLSLDCGHSLCRACITVSNKEAVTSMGGKSSCPVCG). The segment at 92-134 (KKRDLCDHHGEKLLLFCKEDRKVICWLCERSQEHRGHHTVLTE) adopts a B box-type zinc-finger fold. Cys97, His100, Cys119, and His125 together coordinate Zn(2+). Residues 131-239 (VLTEEVFKEC…VRELISDVEC (109 aa)) adopt a coiled-coil conformation. The region spanning 283 to 488 (LSRMLQMFRE…APMTLCPPSS (206 aa)) is the B30.2/SPRY domain.

The protein belongs to the TRIM/RBCC family. As to quaternary structure, homotrimer. Interacts (via B-box and SPRY domain) with TRIM5. In terms of assembly, (Microbial infection) Interacts (via the B30.2/SPRY domain) with HIV-1 capsid complexes. In terms of tissue distribution, is the most abundant form. It is highly expressed in the placenta, spleen, colon and peripheral blood leukocytes.

It localises to the cytoplasm. It is found in the mitochondrion. It carries out the reaction S-ubiquitinyl-[E2 ubiquitin-conjugating enzyme]-L-cysteine + [acceptor protein]-L-lysine = [E2 ubiquitin-conjugating enzyme]-L-cysteine + N(6)-ubiquitinyl-[acceptor protein]-L-lysine.. Its pathway is protein modification; protein ubiquitination. In terms of biological role, functions as antiviral protein and contributes to the defense against retroviral infections. Acts as a capsid-specific restriction factor with the help of TRIM5 and prevents infection from non-host-adapted retroviruses. During influenza A virus infection, promotes programmed cell death by targeting ZBP1 for 'Lys-63'-linked polyubiquitination. In turn, promotes ZBP1 recruitment of RIPK3 to mediate virus-induced programmed necrosis. Negatively regulates the function of mitochondria by enhancing mitochondrial depolarization leading to cytochrome c release and mitochondria-dependent apoptosis. Also promotes the formation of multinucleated giant cells by means of cell fusion and phagocytosis in epithelial cells. The polypeptide is E3 ubiquitin-protein ligase TRIM34 (TRIM34) (Homo sapiens (Human)).